The following is a 93-amino-acid chain: Small ribosomal subunit protein bS16 (93 aa).

This sequence belongs to the bacterial ribosomal protein bS16 family.

The sequence is that of Small ribosomal subunit protein bS16 from Opitutus terrae (strain DSM 11246 / JCM 15787 / PB90-1).